Consider the following 366-residue polypeptide: D-alanine--D-alanine ligase (366 aa).

The ATP-grasp domain occupies 146 to 352 (KICFEHAGLQ…YTELINRLIE (207 aa)). Residue 179–234 (EKKLRYPMFVKPANMGSSVGISKAHNRNELIEAIELALAYDRKFLIEKAINAREME) participates in ATP binding. 3 residues coordinate Mg(2+): aspartate 305, glutamate 319, and asparagine 321.

The protein belongs to the D-alanine--D-alanine ligase family. It depends on Mg(2+) as a cofactor. The cofactor is Mn(2+).

The protein localises to the cytoplasm. It catalyses the reaction 2 D-alanine + ATP = D-alanyl-D-alanine + ADP + phosphate + H(+). It participates in cell wall biogenesis; peptidoglycan biosynthesis. Its function is as follows. Cell wall formation. This chain is D-alanine--D-alanine ligase, found in Chloroherpeton thalassium (strain ATCC 35110 / GB-78).